A 1259-amino-acid chain; its full sequence is Cingulin (1259 aa).

A head region spans residues 9 to 324 (MADQPIPVGQ…EKFPSLQAQP (316 aa)). The ZIM motif lies at 41–55 (QDSYGVAVRVQGIDG). Residues 69 to 79 (SSYDYDRHYSE) show a composition bias toward basic and acidic residues. Disordered stretches follow at residues 69-151 (SSYD…IDTK), 169-232 (VRGR…RQSL), 317-338 (FPSL…KKEL), 941-969 (KSRR…NSSR), and 1192-1259 (REME…TSSC). Positions 80-100 (RSSTLDTAYSQSSRESAWSRG) are enriched in polar residues. Positions 117-127 (SATSQQSTSAS) are enriched in low complexity. Over residues 128-145 (NKTNKNGLSTSSFSNQSS) the composition is skewed to polar residues. Positions 179 to 204 (ALKDERKRSQSLDGRKNYQDTADSRE) are enriched in basic and acidic residues. Residues 220 to 229 (VSSANRSFAR) show a composition bias toward polar residues. Residues 325-1218 (GEDTRSLGSQ…KTMEKESKRK (894 aa)) adopt a coiled-coil conformation. The span at 326 to 338 (EDTRSLGSQKKEL) shows a compositional bias: basic and acidic residues. Residues 1220–1259 (IRPAHNDDDDLSSDGEYGGSYDPSSITSLLTESNLQTSSC) are tail. A compositionally biased stretch (polar residues) spans 1241 to 1259 (DPSSITSLLTESNLQTSSC).

The protein belongs to the cingulin family. Parallel homodimer. Interacts with TJP1/ZO1 and TJP2/ZO2.

The protein localises to the cell junction. The protein resides in the tight junction. Probably plays a role in the formation and regulation of the tight junction (TJ) paracellular permeability barrier, possibly by linking ZO proteins to the actomyosin cytoskeleton. In Xenopus tropicalis (Western clawed frog), this protein is Cingulin.